The sequence spans 793 residues: Probable phosphoketolase (793 aa).

This sequence belongs to the XFP family. Requires thiamine diphosphate as cofactor.

The chain is Probable phosphoketolase from Rhodopirellula baltica (strain DSM 10527 / NCIMB 13988 / SH1).